The primary structure comprises 146 residues: Small RNA-binding protein 11, chloroplastic (146 aa).

A chloroplast-targeting transit peptide spans 1-31; the sequence is MAALARIGGRHLKSVCLINSSASCFFTQRRG. Residues 34–112 form the RRM domain; the sequence is SKLFIGGLSF…RTIFVDYAKA (79 aa). Residue Ser42 is modified to Phosphoserine.

As to expression, expressed in rosette leaves, cauline leaves, stems and flowers.

It localises to the plastid. Its subcellular location is the chloroplast. Functionally, probable RNA-binding protein that may be involved in salt and oxidative stress tolerance. This chain is Small RNA-binding protein 11, chloroplastic, found in Arabidopsis thaliana (Mouse-ear cress).